Reading from the N-terminus, the 271-residue chain is Urease accessory protein UreD (271 aa).

Belongs to the UreD family. UreD, UreF and UreG form a complex that acts as a GTP-hydrolysis-dependent molecular chaperone, activating the urease apoprotein by helping to assemble the nickel containing metallocenter of UreC. The UreE protein probably delivers the nickel.

The protein resides in the cytoplasm. Its function is as follows. Required for maturation of urease via the functional incorporation of the urease nickel metallocenter. The chain is Urease accessory protein UreD from Bacillus sp. (strain TB-90).